The sequence spans 454 residues: Cholesterol 7-desaturase nvd (454 aa).

2 consecutive transmembrane segments (helical) span residues 13–33 (VLCP…LGAG) and 47–67 (TTLS…LWGW). The 105-residue stretch at 117–221 (WYRALDSHLL…SCELNGMVFV (105 aa)) folds into the Rieske domain. 4 residues coordinate [2Fe-2S] cluster: cysteine 158, histidine 160, cysteine 178, and histidine 181.

It belongs to the cholesterol 7-desaturase family. Requires [2Fe-2S] cluster as cofactor.

Its subcellular location is the membrane. The enzyme catalyses cholesterol + NADPH + O2 + H(+) = 7-dehydrocholesterol + NADP(+) + 2 H2O. It catalyses the reaction cholesterol + NADH + O2 + H(+) = 7-dehydrocholesterol + NAD(+) + 2 H2O. The protein operates within steroid hormone biosynthesis; dafachronic acid biosynthesis. Its function is as follows. Catalyzes the production of 7-dehydrocholesterol (7-DHC or cholesta-5,7-dien-3beta-ol) by inserting a double bond (desaturating) at the C7-C8 single bond of cholesterol. This reaction is the first step in the synthesis of the steroid hormone Delta(7)-dafachronic acid. This is Cholesterol 7-desaturase nvd (nvd) from Xenopus laevis (African clawed frog).